Consider the following 450-residue polypeptide: Neuronal acetylcholine receptor subunit alpha-10 (450 aa).

An N-terminal signal peptide occupies residues 1–24; it reads MGLRSHHLSLGLLLLFLLPAECLG. Topologically, residues 25–237 are extracellular; that stretch reads AEGRLALKLF…FTLLLRRRAA (213 aa). 2 N-linked (GlcNAc...) asparagine glycosylation sites follow: N40 and N56. 2 disulfide bridges follow: C154-C168 and C218-C219. 3 helical membrane passes run 238–258, 268–288, and 302–322; these read AYVC…PLAF, VSLG…LAES, and YMAT…IMNL. Residues 323–428 are Cytoplasmic-facing; sequence HYCGPSVRPV…WKRLARVMDR (106 aa). Residues 355 to 380 form a disordered region; the sequence is EPCGQSRPPELSPSPQSPEGGAGPPA. The helical transmembrane segment at 429-449 threads the bilayer; the sequence is FFLAIFFSMALVMSLLVLVQA.

The protein belongs to the ligand-gated ion channel (TC 1.A.9) family. Acetylcholine receptor (TC 1.A.9.1) subfamily. Alpha-10/CHRNA10 sub-subfamily. Forms homo- or heterooligomeric channels in conjunction with CHRNA10. The native outer hair cell receptor may be composed of CHRNA9:CHRNA10 heterooligomers. Found in the stoichiometric form (CHRNA9)2:(CHRNA10)3. Expressed in inner-ear tissue, tonsil, immortalized B-cells, cultured T-cells and peripheral blood lymphocytes.

It localises to the synaptic cell membrane. The protein localises to the cell membrane. It carries out the reaction Ca(2+)(in) = Ca(2+)(out). The enzyme catalyses K(+)(in) = K(+)(out). The catalysed reaction is Na(+)(in) = Na(+)(out). It catalyses the reaction Mg(2+)(in) = Mg(2+)(out). Its activity is regulated as follows. Activated by a myriad of ligands such as acetylcholine. AChR activity is inhibited by the antagonists alpha-conotoxins RgIA and GeXXA, small disulfide-constrained peptides from cone snails. Its function is as follows. Component of neuronal acetylcholine receptors (nAChRs) that function as pentameric, ligand-gated cation channels with high calcium permeability. nAChRs are excitatory neurotrasnmitter receptors formed by a collection of nAChR subunits. Each nAchR subunit confers differential attributes to channel properties, including activation, deactivation and desensitization kinetics, pH sensitivity, cation permeability, and binding to allosteric modulators. Forms heteropentamers with CHRNA9. Expressed in the inner ear, in sympathetic neurons and in other non-neuronal cells, such as skin keratinocytes and lymphocytes. nAChR formed by CHRNA9:CHRNA10 is involved in modulation of auditory stimuli. The channel is permeable to a range of divalent cations including calcium, the influx of which may activate a potassium current which hyperpolarizes the cell membrane. In the ear, mediates synaptic transmission between efferent olivocochlear fibers and hair cells of the cochlea, this may lead to a reduction in basilar membrane motion, altering the activity of auditory nerve fibers and reducing the range of dynamic hearing. This may protect against acoustic trauma. May also regulate keratinocyte adhesion. The chain is Neuronal acetylcholine receptor subunit alpha-10 from Homo sapiens (Human).